The sequence spans 646 residues: Peptidylprolyl isomerase domain and WD repeat-containing protein 1 (646 aa).

Positions 1–30 are disordered; the sequence is MAAESGSDFQQRRRRRRDPEEPEKTELSER. N-acetylalanine is present on Ala2. Positions 17 to 30 are enriched in basic and acidic residues; sequence RDPEEPEKTELSER. WD repeat units follow at residues 80 to 118, 124 to 162, 168 to 208, 213 to 252, 271 to 309, 345 to 386, and 401 to 453; these read ASMYERSYMHRDVITHVVCTKTDFIITASHDGHVKFWKK, EFVKHFRSHLGVIESIAVSSEGALFCSVGDDKAMKVFDV, INML…IYDG, QPLHIFDKLHTSPLTQIRLNPVYKAVVSSDKSGMIEYWTG, TDLYEFAKCKAYPTSVCFSPDGKKIATIGSDRKVRIFRF, AVER…VETN, and MQLA…MFTK. Positions 455-478 are enriched in basic and acidic residues; sequence EPEDTKSADSDRDVFNEKPSKEEV. Residues 455–490 form a disordered region; that stretch reads EPEDTKSADSDRDVFNEKPSKEEVMAATQAEGPKRV. The region spanning 490–645 is the PPIase cyclophilin-type domain; that stretch reads VSDSAIIHTS…EDVSIINITV (156 aa).

Belongs to the cyclophilin-type PPIase family. PPIL1 subfamily. As to quaternary structure, identified in the spliceosome C complex.

The protein localises to the nucleus. The enzyme catalyses [protein]-peptidylproline (omega=180) = [protein]-peptidylproline (omega=0). Its activity is regulated as follows. Inhibited by cyclosporin A (CsA). Functionally, PPIase that catalyzes the cis-trans isomerization of proline imidic peptide bonds in oligopeptides and may therefore assist protein folding. May be involved in pre-mRNA splicing. The sequence is that of Peptidylprolyl isomerase domain and WD repeat-containing protein 1 from Homo sapiens (Human).